A 123-amino-acid polypeptide reads, in one-letter code: MEESRAAADADVSLHNFSARLWEQLVHFHVMRLTDSLFLWVGATPHLRNLAVAMCSRYDPIPVCTSLFGDTSDTTSTGLAQRLARKTSKQVFVSYNLSNTDSNFTLLVENRIKEEMETFPEKF.

The protein belongs to the PSMG4 family. As to quaternary structure, interacts with PSMG3. Associates with alpha subunits of the 20S proteasome.

Functionally, chaperone protein which promotes assembly of the 20S proteasome. The protein is Proteasome assembly chaperone 4 (Psmg4) of Mus musculus (Mouse).